Consider the following 208-residue polypeptide: 2-phospho-L-lactate guanylyltransferase (208 aa).

Belongs to the CofC family. Homodimer.

The catalysed reaction is (2S)-2-phospholactate + GTP + H(+) = (2S)-lactyl-2-diphospho-5'-guanosine + diphosphate. It functions in the pathway cofactor biosynthesis; coenzyme F420 biosynthesis. Functionally, guanylyltransferase that catalyzes the activation of (2S)-2-phospholactate (2-PL) as (2S)-lactyl-2-diphospho-5'-guanosine, via the condensation of 2-PL with GTP. It is involved in the biosynthesis of coenzyme F420, a hydride carrier cofactor. The sequence is that of 2-phospho-L-lactate guanylyltransferase from Haloarcula marismortui (strain ATCC 43049 / DSM 3752 / JCM 8966 / VKM B-1809) (Halobacterium marismortui).